The following is a 58-amino-acid chain: Keratin-associated protein 21-3 (58 aa).

As to quaternary structure, interacts with hair keratins.

In the hair cortex, hair keratin intermediate filaments are embedded in an interfilamentous matrix, consisting of hair keratin-associated proteins (KRTAP), which are essential for the formation of a rigid and resistant hair shaft through their extensive disulfide bond cross-linking with abundant cysteine residues of hair keratins. The matrix proteins include the high-sulfur and high-glycine-tyrosine keratins. The protein is Keratin-associated protein 21-3 (KRTAP21-3) of Homo sapiens (Human).